A 73-amino-acid polypeptide reads, in one-letter code: Mu-conotoxin SIIIA (73 aa).

The first 20 residues, 1–20, serve as a signal peptide directing secretion; it reads MMSKLGVLLTVCPLLFPLTA. Residues 20–40 form a disordered region; the sequence is ALPPDGDQPADRPAERMQDDI. A propeptide spanning residues 21 to 49 is cleaved from the precursor; the sequence is LPPDGDQPADRPAERMQDDISSDEHPLFD. A compositionally biased stretch (basic and acidic residues) spans 28–40; it reads PADRPAERMQDDI. Pyrrolidone carboxylic acid is present on Gln-52. Cystine bridges form between Cys-54–Cys-64, Cys-55–Cys-70, and Cys-59–Cys-71. A Cysteine amide modification is found at Cys-71.

This sequence belongs to the conotoxin M superfamily. In terms of tissue distribution, expressed by the venom duct.

It is found in the secreted. Functionally, mu-conotoxins block voltage-gated sodium channels (Nav). This toxin moderately blocks rNav1.1/SCN1A, rNav1.2/SCN2A, rNav1.3/SCN3A, rNav1.4/SCN4A, and mNav1.6/SCN8A. The sequence is that of Mu-conotoxin SIIIA from Conus striatus (Striated cone).